The chain runs to 65 residues: Large ribosomal subunit protein bL33 (65 aa).

The interval 19 to 40 is disordered; it reads TVPSSKKRSAGVSRYTTEKNRR.

Belongs to the bacterial ribosomal protein bL33 family.

In Prochlorococcus marinus (strain NATL2A), this protein is Large ribosomal subunit protein bL33.